Reading from the N-terminus, the 248-residue chain is Aspartate/glutamate leucyltransferase (248 aa).

The protein belongs to the R-transferase family. Bpt subfamily.

The protein localises to the cytoplasm. It carries out the reaction N-terminal L-glutamyl-[protein] + L-leucyl-tRNA(Leu) = N-terminal L-leucyl-L-glutamyl-[protein] + tRNA(Leu) + H(+). The enzyme catalyses N-terminal L-aspartyl-[protein] + L-leucyl-tRNA(Leu) = N-terminal L-leucyl-L-aspartyl-[protein] + tRNA(Leu) + H(+). In terms of biological role, functions in the N-end rule pathway of protein degradation where it conjugates Leu from its aminoacyl-tRNA to the N-termini of proteins containing an N-terminal aspartate or glutamate. The sequence is that of Aspartate/glutamate leucyltransferase from Methylobacterium nodulans (strain LMG 21967 / CNCM I-2342 / ORS 2060).